Here is a 498-residue protein sequence, read N- to C-terminus: MSTSILRRILDPTRKPKPDAILSISLLTTVSSPPSPPSDPLISDAVSILTHHRSKSRWSTLRSLQPSGFTPSQFSEITLCLRNNPHLSLRFFLFTRRYSLCSHDTHSCSTLIHILSRSRLKSHASEIIRLALRLAATDEDEDRVLKVFRSLIKSYNRCGSAPFVFDLLIKSCLDSKEIDGAVMVMRKLRSRGINAQISTCNALITEVSRRRGASNGYKMYREVFGLDDVSVDEAKKMIGKIKPNATTFNSMMVSFYREGETEMVERIWREMEEEVGCSPNVYSYNVLMEAYCARGLMSEAEKVWEEMKVRGVVYDIVAYNTMIGGLCSNFEVVKAKELFRDMGLKGIECTCLTYEHLVNGYCKAGDVDSGLVVYREMKRKGFEADGLTIEALVEGLCDDRDGQRVVEAADIVKDAVREAMFYPSRNCYELLVKRLCEDGKMDRALNIQAEMVGKGFKPSQETYRAFIDGYGIVGDEETSALLAIEMAESLKLRAEEES.

7 PPR repeats span residues 244-274 (NATT…MEEE), 280-314 (NVYS…GVVY), 315-349 (DIVA…GIEC), 350-384 (TCLT…GFEA), 385-423 (DGLT…MFYP), 424-458 (SRNC…GFKP), and 459-489 (SQET…MAES).

This sequence belongs to the PPR family. P subfamily.

The polypeptide is Pentatricopeptide repeat-containing protein At2g15980 (Arabidopsis thaliana (Mouse-ear cress)).